The sequence spans 57 residues: COP9 signalosome complex subunit 9 (57 aa).

It belongs to the CSN9 family. As to quaternary structure, component of the CSN complex, probably composed of cops1, cops2, cops3, cops4, cops5, cops6, cops7, cops8 and cops9.

It is found in the nucleus. The protein resides in the cytoplasm. Its subcellular location is the nucleoplasm. Functionally, component of the COP9 signalosome complex (CSN), a complex involved in various cellular and developmental processes. The CSN complex is an essential regulator of the ubiquitin (Ubl) conjugation pathway by mediating the deneddylation of the cullin subunits of SCF-type E3 ligase complexes, leading to decrease the Ubl ligase activity. May play a role in cell proliferation. The chain is COP9 signalosome complex subunit 9 from Xenopus tropicalis (Western clawed frog).